Reading from the N-terminus, the 486-residue chain is Corytuberine synthase (486 aa).

A helical transmembrane segment spans residues 6-21 (ALFSLIPVILVFILLL). Residue Cys428 participates in heme binding.

The protein belongs to the cytochrome P450 family. It depends on heme as a cofactor.

The protein resides in the endoplasmic reticulum membrane. The catalysed reaction is (S)-reticuline + reduced [NADPH--hemoprotein reductase] + O2 = (S)-corytuberine + oxidized [NADPH--hemoprotein reductase] + 2 H2O + 2 H(+). Its activity is regulated as follows. Inhibited by ketoconazole. Cytochrome P450 that catalyzes an intramolecular C-C phenol coupling of (S)-reticuline in magnoflorine biosynthesis. Catalyzes the formation of (S)-corytuberine from (S)-reticuline, and also, with a lover efficiency, the 4'-O-demethylation of codamine to produce orientaline, and subsequent C-C-phenol coupling of orientaline. Can also use (R,S)-norreticuline, (R,S)-orientaline, (S)-N-methylcoclaurine and (S)-coclaurine as substrates, but not (R,S)-6-O-methyllaudanosoline, (R,S)-6-O-methylnorlaudanosoline, (R,S)-laudanine, (R,S)-norlaudanine, (R,S)-4'-O-methyllaudanosoline, (R,S)-pseudocodamine, (R,S)-norpseudocodamine, (R,S)-laudanosine, (R,S)-norlaudanosine, (R,S)-laudanosoline or (R,S)-norlaudanosoline. The polypeptide is Corytuberine synthase (Coptis japonica (Japanese goldthread)).